Consider the following 422-residue polypeptide: Protein krasavietz (422 aa).

The segment at 1 to 26 (MSQKTERPVLSGQRIKTRKRDEREKY) is disordered. In terms of domain architecture, W2 spans 244–415 (KLHKAQASQE…QSAEEESESE (172 aa)). 3 positions are modified to phosphoserine: Ser407, Ser412, and Ser414.

The protein belongs to the BZW family. In terms of tissue distribution, expressed in mushroom bodies.

Its function is as follows. May be involved in memory formation. The protein is Protein krasavietz (kra) of Drosophila melanogaster (Fruit fly).